The chain runs to 342 residues: ATP-dependent (S)-NAD(P)H-hydrate dehydratase (342 aa).

A YjeF C-terminal domain is found at 11-337 (ILPALEKVVP…EYLGHRLFTF (327 aa)). (6S)-NADPHX contacts are provided by residues G127 and 180 to 186 (NVMEHKR). ATP-binding positions include 229 to 233 (KGKTD) and 248 to 257 (GSPRRCGGQG). D258 is a (6S)-NADPHX binding site.

It belongs to the NnrD/CARKD family. It depends on Mg(2+) as a cofactor.

The catalysed reaction is (6S)-NADHX + ATP = ADP + phosphate + NADH + H(+). It catalyses the reaction (6S)-NADPHX + ATP = ADP + phosphate + NADPH + H(+). Catalyzes the dehydration of the S-form of NAD(P)HX at the expense of ATP, which is converted to ADP. Together with NAD(P)HX epimerase, which catalyzes the epimerization of the S- and R-forms, the enzyme allows the repair of both epimers of NAD(P)HX, a damaged form of NAD(P)H that is a result of enzymatic or heat-dependent hydration. This is ATP-dependent (S)-NAD(P)H-hydrate dehydratase from Physcomitrium patens (Spreading-leaved earth moss).